The following is a 549-amino-acid chain: Glucose-6-phosphate isomerase (549 aa).

The Proton donor role is filled by Glu355. Residues His386 and Lys514 contribute to the active site.

Belongs to the GPI family.

The protein resides in the cytoplasm. It catalyses the reaction alpha-D-glucose 6-phosphate = beta-D-fructose 6-phosphate. It functions in the pathway carbohydrate biosynthesis; gluconeogenesis. The protein operates within carbohydrate degradation; glycolysis; D-glyceraldehyde 3-phosphate and glycerone phosphate from D-glucose: step 2/4. Its function is as follows. Catalyzes the reversible isomerization of glucose-6-phosphate to fructose-6-phosphate. The polypeptide is Glucose-6-phosphate isomerase (Sodalis glossinidius (strain morsitans)).